We begin with the raw amino-acid sequence, 136 residues long: Methylglyoxal synthase (136 aa).

One can recognise an MGS-like domain in the interval 1-136; that stretch reads MKIALIAHDR…REVVREENEA (136 aa). Substrate contacts are provided by residues histidine 8, lysine 12, 34-37, and 54-55; these read TGTT and SG. The active-site Proton donor/acceptor is the aspartate 60. Residue histidine 87 participates in substrate binding.

This sequence belongs to the methylglyoxal synthase family.

The enzyme catalyses dihydroxyacetone phosphate = methylglyoxal + phosphate. In terms of biological role, catalyzes the formation of methylglyoxal from dihydroxyacetone phosphate. In Brevibacillus brevis (strain 47 / JCM 6285 / NBRC 100599), this protein is Methylglyoxal synthase.